Here is a 481-residue protein sequence, read N- to C-terminus: MENDQFMCPTDIITGIVFIDGELAMLTLTADGELRWTEYGLRQYLSMKKDVLGFIVEGKQIRVKAVVEKEAGGICCGQFGGDFVRKDFVFEPLIDQNGWCYKLRQYLDSLGRPKRLLVFVNPFGGKKSAREIFVKEVKPLFEDADVQLEIQETKYQLHAKEFVKSMDVSKYDGIVCVSGDGILVEVVNGLLERADWRNALKLPIGMVPAGTGNGMIKSLLDTVGLRCCANSATISIIRGHKRSVDVATIAQGNTKFFSVLMLAWGLIADIDIESEKFRWMGSARIDFYALQRIICLRRYNGRILFLPAPGFEGYGQPASCSLYQEPHVSDKEVGYQGPETKFEDLEWREMKGPFVTIWLHNVPWGSENTLTAPAAKFSDGYLDLIVLKNCPKLVLLSLMRQTSSGTHVESPYIVYIKVKAFVLEPGALVDEPDKEGIIDSDGEVLARGKRTYKCDQKALMSYDKLQVTVDQGLATLFSPEY.

Positions 111–253 (GRPKRLLVFV…VDVATIAQGN (143 aa)) constitute a DAGKc domain. ATP-binding positions include 121-123 (NPF) and Thr153. 178–181 (SGDG) is a substrate binding site. The active-site Proton donor/acceptor is Asp180. ATP contacts are provided by residues Glu185 and 210-212 (GTG). Asp271 provides a ligand contact to substrate. Residues Arg278, Arg284, and 441 to 443 (DGE) each bind ATP.

Requires Mg(2+) as cofactor. Highly expressed in flowers and siliques and at lower levels in roots, leaves and stems.

The protein resides in the vacuole membrane. The enzyme catalyses a sphingoid base + ATP = a sphingoid 1-phosphate + ADP + H(+). Its activity is regulated as follows. Activated by phosphatidic acid (PA). Binding with PA stimulates the activity by promoting the binding of substrate to the catalytic site. Involved in the production of sphingolipid metabolites. Phosphorylates sphingosine and various l sphingoid long-chain base (LCB) products, such as phytosphingosine (PHS, 4-hydroxysphinganine), 4-hydroxy-8-sphingenine, 4,8-sphingadienine and D-erythro-dihydrosphingosine, but has a very few activity toward D,L-threo- dihydrosphingosine. Is required for abscisic acid (ABA) signaling that mediates stomatal closure, inhibition of seed germination and root elongation. May function upstream of PLDALPHA1 and phosphatidic acid (PA) in an amplification response to ABA that mediates stomatal closure. The polypeptide is Sphingosine kinase 2 (SPHK2) (Arabidopsis thaliana (Mouse-ear cress)).